The sequence spans 317 residues: MRSCFCVRRSRDPPPPQPPPPQRGTDQATMPEVKELSEALPETPMDPITGVGVVASRNRAPTGYDVVAQTADGVDADLWKDGLFKSKVTRYLCFTRSFSKENSHLGNVLVDMKLIDVKDTLPVGFIPIQETVDTQEVVFRKKRLCIKFIPRDSTEAAICDIRIMGRTKQAPPQYTFIGELNSMGIWYRMGRVPRNHDSSQPTTPSQSSASSTPAPNLPRHISLTLPATFRGRNNTSTDYEYQLSNLYAISAMDGVPFMISEKFSCIPESMQPFDLLGITIKSLAEIEKEYEYSFRTEQSAAARLPPSPTRCQQIPQS.

A disordered region spans residues 1-49 (MRSCFCVRRSRDPPPPQPPPPQRGTDQATMPEVKELSEALPETPMDPIT). The segment covering 13–22 (PPPPQPPPPQ) has biased composition (pro residues). An MABP domain is found at 45 to 191 (MDPITGVGVV…SMGIWYRMGR (147 aa)). Ser-99 carries the post-translational modification Phosphoserine. 3 positions are modified to phosphothreonine: Thr-120, Thr-202, and Thr-203. Positions 193–218 (PRNHDSSQPTTPSQSSASSTPAPNLP) are disordered. Residues 198–214 (SSQPTTPSQSSASSTPA) show a composition bias toward low complexity. At Ser-222 the chain carries Phosphoserine. In terms of domain architecture, UMA spans 252–301 (MDGVPFMISEKFSCIPESMQPFDLLGITIKSLAEIEKEYEYSFRTEQSAA). The tract at residues 297 to 317 (EQSAAARLPPSPTRCQQIPQS) is disordered. Ser-307 carries the phosphoserine modification.

It belongs to the MVB12 family. As to quaternary structure, component of the ESCRT-I complex (endosomal sorting complex required for transport I) which consists of TSG101, VPS28, a VPS37 protein (VPS37A to -D) and MVB12A or MVB12B in a 1:1:1:1 stoichiometry. Interacts with TSG101; the association appears to be mediated by the TSG101-VPS37 binary subcomplex. Interacts with VPS28. Interacts with VPS37B; the association appears to be mediated by the TSG101-VPS37 binary subcomplex. Interacts with VPS37C; the association appears to be mediated by the TSG101-VPS37 binary subcomplex.

Its subcellular location is the endosome. It localises to the late endosome membrane. In terms of biological role, component of the ESCRT-I complex, a regulator of vesicular trafficking process. Required for the sorting of endocytic ubiquitinated cargos into multivesicular bodies. The polypeptide is Multivesicular body subunit 12B (Mvb12b) (Mus musculus (Mouse)).